Reading from the N-terminus, the 94-residue chain is C-C motif chemokine 26 (94 aa).

A signal peptide spans 1–23 (MKSFPVAFLVLLIFILSVHRGVT). 2 disulfides stabilise this stretch: Cys-33/Cys-57 and Cys-34/Cys-73.

This sequence belongs to the intercrine beta (chemokine CC) family. Monomer.

It is found in the secreted. Functionally, chemoattractant for eosinophils and basophils. Acts as a ligand for C-C chemokine receptor CCR3 which triggers Ca(2+) mobilization in eosinophils. Also acts as a ligand for CX3C chemokine receptor CX3CR1, inducing cell chemotaxis. The polypeptide is C-C motif chemokine 26 (Canis lupus familiaris (Dog)).